The chain runs to 207 residues: ADP-ribose pyrophosphatase (207 aa).

Residues 37–38 and R64 contribute to the substrate site; that span reads RE. In terms of domain architecture, Nudix hydrolase spans 41-172; it reads EHFGAVAIVA…EIVNSIAIAG (132 aa). Position 76 (A76) interacts with Mg(2+). A Nudix box motif is present at residues 77-99; it reads GLLDVAGEPPHLTAARELREEVG. L78 contacts substrate. E93 and E97 together coordinate Mg(2+). Residues 114-116 and E120 contribute to the substrate site; that span reads APG. Residue E142 coordinates Mg(2+). E142 acts as the Proton acceptor in catalysis.

Belongs to the Nudix hydrolase family. As to quaternary structure, homodimer. The cofactor is Mg(2+). Mn(2+) is required as a cofactor.

The enzyme catalyses ADP-D-ribose + H2O = D-ribose 5-phosphate + AMP + 2 H(+). The catalysed reaction is 8-oxo-dGDP + H2O = 8-oxo-dGMP + phosphate + H(+). It carries out the reaction 8-oxo-GDP + H2O = 8-oxo-GMP + phosphate + H(+). Its function is as follows. Catalyzes the hydrolysis of ADP-ribose (ADPR) to AMP and ribose-5-phosphate. Can also hydrolyze ADP-mannose and ADP-glucose, with lower efficiency. Has weaker activity with NAD, GDP-sugars and UDP-sugars. Also catalyzes the conversion of 8-oxo-dGDP to 8-oxo-dGMP, and 8-oxo-GDP to 8-oxo-GMP. Functions in concert with MutT1 to detoxify 8-oxo-dGTP to 8-oxo-dGMP and may play an important role in supporting cellular growth under oxidative stress. The catalytic efficiency is much higher for the hydrolysis of ADPR than 8-oxo-dGTP, suggesting a more relevant biological role in hydrolysis of ADPR. The polypeptide is ADP-ribose pyrophosphatase (Mycobacterium tuberculosis (strain ATCC 25618 / H37Rv)).